The sequence spans 381 residues: tRNA-specific 2-thiouridylase MnmA (381 aa).

ATP is bound by residues 9-16 (GMSGGVDS) and Met35. Positions 95–97 (NPD) are interaction with target base in tRNA. Catalysis depends on Cys100, which acts as the Nucleophile. An intrachain disulfide couples Cys100 to Cys196. ATP is bound at residue Gly124. Residues 146–148 (KDQ) form an interaction with tRNA region. Cys196 serves as the catalytic Cysteine persulfide intermediate. The segment at 308–309 (RY) is interaction with tRNA.

Belongs to the MnmA/TRMU family.

Its subcellular location is the cytoplasm. It catalyses the reaction S-sulfanyl-L-cysteinyl-[protein] + uridine(34) in tRNA + AH2 + ATP = 2-thiouridine(34) in tRNA + L-cysteinyl-[protein] + A + AMP + diphosphate + H(+). Its function is as follows. Catalyzes the 2-thiolation of uridine at the wobble position (U34) of tRNA, leading to the formation of s(2)U34. This chain is tRNA-specific 2-thiouridylase MnmA, found in Burkholderia multivorans (strain ATCC 17616 / 249).